Consider the following 492-residue polypeptide: Glutamyl-tRNA(Gln) amidotransferase subunit A (492 aa).

Residues K78 and S158 each act as charge relay system in the active site. S182 serves as the catalytic Acyl-ester intermediate.

It belongs to the amidase family. GatA subfamily. As to quaternary structure, heterotrimer of A, B and C subunits.

The enzyme catalyses L-glutamyl-tRNA(Gln) + L-glutamine + ATP + H2O = L-glutaminyl-tRNA(Gln) + L-glutamate + ADP + phosphate + H(+). Functionally, allows the formation of correctly charged Gln-tRNA(Gln) through the transamidation of misacylated Glu-tRNA(Gln) in organisms which lack glutaminyl-tRNA synthetase. The reaction takes place in the presence of glutamine and ATP through an activated gamma-phospho-Glu-tRNA(Gln). The polypeptide is Glutamyl-tRNA(Gln) amidotransferase subunit A (Rhodopseudomonas palustris (strain BisB18)).